The following is an 87-amino-acid chain: Putative defensin-like protein 238 (87 aa).

A signal peptide spans 1–23; it reads MRSITWFIVFCVFMFIALNHVKG. 4 disulfides stabilise this stretch: cysteine 30–cysteine 87, cysteine 40–cysteine 65, cysteine 48–cysteine 78, and cysteine 63–cysteine 80.

Belongs to the DEFL family.

The protein localises to the secreted. The polypeptide is Putative defensin-like protein 238 (SCRL16) (Arabidopsis thaliana (Mouse-ear cress)).